The primary structure comprises 152 residues: Ubiquitin-conjugating enzyme E2 2 (152 aa).

Residues Pro-4–Thr-150 enclose the UBC core domain. Catalysis depends on Cys-88, which acts as the Glycyl thioester intermediate.

Belongs to the ubiquitin-conjugating enzyme family.

The enzyme catalyses S-ubiquitinyl-[E1 ubiquitin-activating enzyme]-L-cysteine + [E2 ubiquitin-conjugating enzyme]-L-cysteine = [E1 ubiquitin-activating enzyme]-L-cysteine + S-ubiquitinyl-[E2 ubiquitin-conjugating enzyme]-L-cysteine.. Its pathway is protein modification; protein ubiquitination. Functionally, catalyzes the covalent attachment of ubiquitin to other proteins. The polypeptide is Ubiquitin-conjugating enzyme E2 2 (UBC2) (Triticum aestivum (Wheat)).